The following is a 361-amino-acid chain: Phospho-N-acetylmuramoyl-pentapeptide-transferase (361 aa).

10 consecutive transmembrane segments (helical) span residues 28 to 48 (LAIIITLSLSFIMGPILIKFL), 74 to 94 (TMGGIMIILSSGLSTLLLADL), 99 to 119 (IWITLFGFISFGIIGFMDDYA), 133 to 153 (SKLVLQGIISLIICVLLEYLD), 168 to 188 (LNLDLGYFYIVFAIFVIVGSS), 203 to 223 (VPIAFTAGSFALISYLVGNLI), 236 to 256 (TGELTVLCAGLVGSCLGFLWF), 263 to 283 (VFMGDTGSLSLGGVLGIISVI), 288 to 308 (IVLAIVGGLFVIETASVILQV), and 338 to 358 (KVVIRFWIISVIFALIGLSSL).

It belongs to the glycosyltransferase 4 family. MraY subfamily. Mg(2+) is required as a cofactor.

The protein localises to the cell inner membrane. The enzyme catalyses UDP-N-acetyl-alpha-D-muramoyl-L-alanyl-gamma-D-glutamyl-meso-2,6-diaminopimeloyl-D-alanyl-D-alanine + di-trans,octa-cis-undecaprenyl phosphate = di-trans,octa-cis-undecaprenyl diphospho-N-acetyl-alpha-D-muramoyl-L-alanyl-D-glutamyl-meso-2,6-diaminopimeloyl-D-alanyl-D-alanine + UMP. It participates in cell wall biogenesis; peptidoglycan biosynthesis. In terms of biological role, catalyzes the initial step of the lipid cycle reactions in the biosynthesis of the cell wall peptidoglycan: transfers peptidoglycan precursor phospho-MurNAc-pentapeptide from UDP-MurNAc-pentapeptide onto the lipid carrier undecaprenyl phosphate, yielding undecaprenyl-pyrophosphoryl-MurNAc-pentapeptide, known as lipid I. The sequence is that of Phospho-N-acetylmuramoyl-pentapeptide-transferase from Rickettsia akari (strain Hartford).